The primary structure comprises 673 residues: UvrABC system protein B (673 aa).

In terms of domain architecture, Helicase ATP-binding spans 26-183 (EGLEDGLAHQ…RRLAELQYAR (158 aa)). 39–46 (GVTGSGKT) contributes to the ATP binding site. The Beta-hairpin signature appears at 92–115 (YYDYYQPEAYVPSSDTFIEKDASV). In terms of domain architecture, Helicase C-terminal spans 431 to 597 (QVDDLLSEIR…GLNKKVVDIL (167 aa)). The 36-residue stretch at 633–668 (QQKIHELEGLMMQHAQNLEFEEAAQVRDQLHQLRQL) folds into the UVR domain.

The protein belongs to the UvrB family. As to quaternary structure, forms a heterotetramer with UvrA during the search for lesions. Interacts with UvrC in an incision complex.

It is found in the cytoplasm. Functionally, the UvrABC repair system catalyzes the recognition and processing of DNA lesions. A damage recognition complex composed of 2 UvrA and 2 UvrB subunits scans DNA for abnormalities. Upon binding of the UvrA(2)B(2) complex to a putative damaged site, the DNA wraps around one UvrB monomer. DNA wrap is dependent on ATP binding by UvrB and probably causes local melting of the DNA helix, facilitating insertion of UvrB beta-hairpin between the DNA strands. Then UvrB probes one DNA strand for the presence of a lesion. If a lesion is found the UvrA subunits dissociate and the UvrB-DNA preincision complex is formed. This complex is subsequently bound by UvrC and the second UvrB is released. If no lesion is found, the DNA wraps around the other UvrB subunit that will check the other stand for damage. In Enterobacter sp. (strain 638), this protein is UvrABC system protein B.